The chain runs to 274 residues: Large ribosomal subunit protein uL2 (274 aa).

A disordered region spans residues 195–274; sequence VGNSDHGLER…SKYIIERRKK (80 aa). 2 stretches are compositionally biased toward basic residues: residues 207 to 220 and 244 to 264; these read KAGRSRWQGRRPRN and PRSRKGLYAKGLKTRAPKKQS.

This sequence belongs to the universal ribosomal protein uL2 family. In terms of assembly, part of the 50S ribosomal subunit. Forms a bridge to the 30S subunit in the 70S ribosome.

Functionally, one of the primary rRNA binding proteins. Required for association of the 30S and 50S subunits to form the 70S ribosome, for tRNA binding and peptide bond formation. It has been suggested to have peptidyltransferase activity; this is somewhat controversial. Makes several contacts with the 16S rRNA in the 70S ribosome. The chain is Large ribosomal subunit protein uL2 from Bacteroides thetaiotaomicron (strain ATCC 29148 / DSM 2079 / JCM 5827 / CCUG 10774 / NCTC 10582 / VPI-5482 / E50).